A 515-amino-acid chain; its full sequence is Tripartite motif-containing protein 5 (515 aa).

Position 2 is an N-acetylalanine (Ala2). The RING-type zinc finger occupies 15–60 (CPICLELLTEPLSLPCGHSFCQACITANHKESMLYKEEERSCPVCR). Ser87 carries the phosphoserine modification. Residues 92-133 (QKVDHCARHGEKLLLFCQEDSKVICWLCERSQEHRGHHTFLM) form a B box-type zinc finger. The Zn(2+) site is built by Cys97, His100, Cys119, and His125. Positions 137-225 (AQEYHVKLQT…LTKSETEMVQ (89 aa)) form a coiled coil. Residues 187 to 200 (FEQLREILDWEESN) form a required for interaction with GABARAP and for autophagy region. The B30.2/SPRY domain maps to 283–515 (LKGMLDMFRE…VPMTLCSPSS (233 aa)).

It belongs to the TRIM/RBCC family. In terms of assembly, can form homodimers and homotrimers. In addition to lower-order dimerization, also exhibits a higher-order multimerization and both low- and high-order multimerizations are essential for its restriction activity. Interacts with BTBD1 and BTBD2. Interacts with PSMC4, PSMC5, PSMD7 and HSPA8/HSC70. Interacts (via B30.2/SPRY domain) with HSPA1A/B. Interacts with PSMC2, MAP3K7/TAK1, TAB2 and TAB3. Interacts with SQSTM1. Interacts with TRIM6 and TRIM34. Interacts with ULK1 (phosphorylated form), GABARAP, GABARAPL1, GABARAPL2, MAP1LC3A, MAP1LC3C and BECN1. In terms of processing, degraded in a proteasome-independent fashion in the absence of viral infection but in a proteasome-dependent fashion following exposure to restriction sensitive virus. Autoubiquitinated in a RING finger- and UBE2D2-dependent manner. Monoubiquitinated by TRIM21. Deubiquitinated by Yersinia YopJ. Ubiquitination may not lead to proteasomal degradation.

The protein localises to the cytoplasm. It is found in the nucleus. The enzyme catalyses S-ubiquitinyl-[E2 ubiquitin-conjugating enzyme]-L-cysteine + [acceptor protein]-L-lysine = [E2 ubiquitin-conjugating enzyme]-L-cysteine + N(6)-ubiquitinyl-[acceptor protein]-L-lysine.. The protein operates within protein modification; protein ubiquitination. Functionally, capsid-specific restriction factor that prevents infection from non-host-adapted retroviruses. Blocks viral replication early in the life cycle, after viral entry but before reverse transcription. In addition to acting as a capsid-specific restriction factor, also acts as a pattern recognition receptor that activates innate immune signaling in response to the retroviral capsid lattice. Binding to the viral capsid triggers its E3 ubiquitin ligase activity, and in concert with the heterodimeric ubiquitin conjugating enzyme complex UBE2V1-UBE2N (also known as UBC13-UEV1A complex) generates 'Lys-63'-linked polyubiquitin chains, which in turn are catalysts in the autophosphorylation of the MAP3K7/TAK1 complex (includes TAK1, TAB2, and TAB3). Activation of the MAP3K7/TAK1 complex by autophosphorylation results in the induction and expression of NF-kappa-B and MAPK-responsive inflammatory genes, thereby leading to an innate immune response in the infected cell. Plays a role in regulating autophagy through activation of autophagy regulator BECN1 by causing its dissociation from its inhibitors BCL2 and TAB2. The protein is Tripartite motif-containing protein 5 (TRIM5) of Chlorocebus aethiops (Green monkey).